The following is an 89-amino-acid chain: Small ribosomal subunit protein uS15 (89 aa).

The protein belongs to the universal ribosomal protein uS15 family. In terms of assembly, part of the 30S ribosomal subunit. Forms a bridge to the 50S subunit in the 70S ribosome, contacting the 23S rRNA.

Its function is as follows. One of the primary rRNA binding proteins, it binds directly to 16S rRNA where it helps nucleate assembly of the platform of the 30S subunit by binding and bridging several RNA helices of the 16S rRNA. Functionally, forms an intersubunit bridge (bridge B4) with the 23S rRNA of the 50S subunit in the ribosome. This Lactococcus lactis subsp. lactis (strain IL1403) (Streptococcus lactis) protein is Small ribosomal subunit protein uS15.